The following is a 399-amino-acid chain: Enoyl-[acyl-carrier-protein] reductase [NADH] (399 aa).

NAD(+) contacts are provided by residues 48–53, 74–75, 111–112, and 139–140; these read GASTGY, FE, DA, and LA. Tyr225 contacts substrate. The Proton donor role is filled by Tyr235. NAD(+)-binding positions include Lys244 and 274–276; that span reads VVT.

Belongs to the TER reductase family. In terms of assembly, monomer.

It carries out the reaction a 2,3-saturated acyl-[ACP] + NAD(+) = a (2E)-enoyl-[ACP] + NADH + H(+). It functions in the pathway lipid metabolism; fatty acid biosynthesis. Its function is as follows. Involved in the final reduction of the elongation cycle of fatty acid synthesis (FAS II). Catalyzes the reduction of a carbon-carbon double bond in an enoyl moiety that is covalently linked to an acyl carrier protein (ACP). In Yersinia enterocolitica serotype O:8 / biotype 1B (strain NCTC 13174 / 8081), this protein is Enoyl-[acyl-carrier-protein] reductase [NADH].